A 656-amino-acid chain; its full sequence is DNA mismatch repair protein MutL (656 aa).

The protein belongs to the DNA mismatch repair MutL/HexB family.

Functionally, this protein is involved in the repair of mismatches in DNA. It is required for dam-dependent methyl-directed DNA mismatch repair. May act as a 'molecular matchmaker', a protein that promotes the formation of a stable complex between two or more DNA-binding proteins in an ATP-dependent manner without itself being part of a final effector complex. This chain is DNA mismatch repair protein MutL, found in Lactococcus lactis subsp. lactis (strain IL1403) (Streptococcus lactis).